The following is a 271-amino-acid chain: Regulatory protein RecX (271 aa).

It belongs to the RecX family.

It localises to the cytoplasm. Modulates RecA activity. This Lactobacillus johnsonii (strain CNCM I-12250 / La1 / NCC 533) protein is Regulatory protein RecX.